The following is a 192-amino-acid chain: Elongation factor P (192 aa).

The protein belongs to the elongation factor P family.

The protein resides in the cytoplasm. The protein operates within protein biosynthesis; polypeptide chain elongation. In terms of biological role, involved in peptide bond synthesis. Stimulates efficient translation and peptide-bond synthesis on native or reconstituted 70S ribosomes in vitro. Probably functions indirectly by altering the affinity of the ribosome for aminoacyl-tRNA, thus increasing their reactivity as acceptors for peptidyl transferase. The protein is Elongation factor P (efp) of Aquifex aeolicus (strain VF5).